We begin with the raw amino-acid sequence, 458 residues long: MNRIRIHVLPTNRGRITPVPRSQEPLSCSFTHRPCSQPRLEGQEFCIKHILEDKNAPFKQCSYVSTKNGKRCPSAAPKPEKKDGASFCAEHARRNALALHAQMKKTSPGPVGETLLCQLSSYAKTELGSQTPESSRSEASRILDEDSWSDGDQEPITVDQTWRGDPDSEADSIDSDQEDPLKHAGVYTAEEVALIMREKLIRLQSLYIDQFKRLQHLLKEKKRRYLHNRKVEHEALGSSLLTGPEGLLAKERENLKRLKCLRRYRQRYGVEALLHRQLKERRMLATDGAAQQAHTTRSSQRCLAFVDDVRCSNQSLPMTRHCLTHICQDTNQVLFKCCQGSEEVPCNKPVPVSLSEDPCCPLHFQLPPQMYKPEQDLDVVGDGMQCPPSPLLFDPSLTLEDHPVKEIAEGPVDILGQMQMAGDGCRSQGPRNSEKAPAPLPQSGIATANGKPEPTSVS.

Lys-78 participates in a covalent cross-link: Glycyl lysine isopeptide (Lys-Gly) (interchain with G-Cter in SUMO2). Residues 126 to 182 are disordered; sequence ELGSQTPESSRSEASRILDEDSWSDGDQEPITVDQTWRGDPDSEADSIDSDQEDPLK. Residue Thr-131 is modified to Phosphothreonine. A compositionally biased stretch (basic and acidic residues) spans 135–144; it reads SRSEASRILD. 5 positions are modified to phosphoserine: Ser-147, Ser-149, Ser-168, Ser-172, and Ser-175. Residues 167 to 178 show a composition bias toward acidic residues; that stretch reads DSEADSIDSDQE. The interval 308-364 is required for interaction with other NSL complex members; sequence DVRCSNQSLPMTRHCLTHICQDTNQVLFKCCQGSEEVPCNKPVPVSLSEDPCCPLHF. The interval 419–458 is disordered; sequence QMAGDGCRSQGPRNSEKAPAPLPQSGIATANGKPEPTSVS.

Component of the NSL complex at least composed of KAT8/MOF, KANSL1, KANSL2, KANSL3, MCRS1, PHF20, OGT1/OGT, WDR5 and HCFC1.

It is found in the nucleus. The protein localises to the mitochondrion. Functionally, non-catalytic component of the NSL histone acetyltransferase complex, a multiprotein complex that mediates histone H4 acetylation at 'Lys-5'- and 'Lys-8' (H4K5ac and H4K8ac) at transcription start sites and promotes transcription initiation. Required for NSL complex stability and for transcription of intraciliary transport genes in both ciliated and non-ciliated cells by regulating histone H4 acetylation at 'Lys-5'- and 'Lys-12' (H4K5ac and H4K12ac). This is necessary for cilium assembly in ciliated cells and for organization of the microtubule cytoskeleton in non-ciliated cells. Required within the NSL complex to maintain nuclear architecture stability by promoting KAT8-mediated acetylation of lamin LMNA. This chain is KAT8 regulatory NSL complex subunit 2 (KANSL2), found in Bos taurus (Bovine).